A 319-amino-acid chain; its full sequence is Formimidoylglutamase (319 aa).

The Mn(2+) site is built by His131, Asp154, His156, Asp158, Cys248, and Asp250.

This sequence belongs to the arginase family. Mn(2+) is required as a cofactor.

The catalysed reaction is N-formimidoyl-L-glutamate + H2O = formamide + L-glutamate. Its pathway is amino-acid degradation; L-histidine degradation into L-glutamate; L-glutamate from N-formimidoyl-L-glutamate (hydrolase route): step 1/1. Catalyzes the conversion of N-formimidoyl-L-glutamate to L-glutamate and formamide. This chain is Formimidoylglutamase, found in Legionella pneumophila subsp. pneumophila (strain Philadelphia 1 / ATCC 33152 / DSM 7513).